The following is a 171-amino-acid chain: S-ribosylhomocysteine lyase (171 aa).

Residues His54, His58, and Cys128 each coordinate Fe cation.

The protein belongs to the LuxS family. As to quaternary structure, homodimer. It depends on Fe cation as a cofactor.

It catalyses the reaction S-(5-deoxy-D-ribos-5-yl)-L-homocysteine = (S)-4,5-dihydroxypentane-2,3-dione + L-homocysteine. In terms of biological role, involved in the synthesis of autoinducer 2 (AI-2) which is secreted by bacteria and is used to communicate both the cell density and the metabolic potential of the environment. The regulation of gene expression in response to changes in cell density is called quorum sensing. Catalyzes the transformation of S-ribosylhomocysteine (RHC) to homocysteine (HC) and 4,5-dihydroxy-2,3-pentadione (DPD). The protein is S-ribosylhomocysteine lyase of Cronobacter sakazakii (strain ATCC BAA-894) (Enterobacter sakazakii).